Here is a 276-residue protein sequence, read N- to C-terminus: CDP-diacylglycerol--serine O-phosphatidyltransferase (276 aa).

A disordered region spans residues 1–21 (MVESDEDFAPQEFPHTDTDVI). Phosphoserine is present on residues Ser4, Ser34, Ser42, Ser46, Ser47, and Ser50. The next 4 helical transmembrane spans lie at 82-102 (MADY…VSCL), 163-183 (IAFA…FFVL), 210-230 (YFEG…AYCV), and 248-268 (QILE…GMIS).

This sequence belongs to the CDP-alcohol phosphatidyltransferase class-I family. It depends on Mn(2+) as a cofactor. Requires Mg(2+) as cofactor.

It is found in the microsome membrane. It localises to the endoplasmic reticulum membrane. The protein resides in the mitochondrion outer membrane. The enzyme catalyses a CDP-1,2-diacyl-sn-glycerol + L-serine = a 1,2-diacyl-sn-glycero-3-phospho-L-serine + CMP + H(+). The protein operates within phospholipid metabolism; phosphatidylethanolamine biosynthesis; phosphatidylethanolamine from CDP-diacylglycerol: step 1/2. Functionally, catalyzes the synthesis of phosphatidylserine (PtdSer). The protein is CDP-diacylglycerol--serine O-phosphatidyltransferase (CHO1) of Saccharomyces cerevisiae (strain ATCC 204508 / S288c) (Baker's yeast).